A 1620-amino-acid chain; its full sequence is ABC-type organic anion transporter ABCA8B (1620 aa).

7 consecutive transmembrane segments (helical) span residues 30–50, 223–243, 267–287, 298–318, 326–346, 352–372, and 396–416; these read SLME…YPHG, FFIF…SINV, SWGL…ALVI, FMVV…LAFL, SVLT…LGFT, LPAP…TLGM, and LIIA…ALMM. Positions 479–714 constitute an ABC transporter 1 domain; it reads IRIRNISKEY…WGVGYHLSLQ (236 aa). 515-522 serves as a coordination point for ATP; sequence GHSGAGKS. N-linked (GlcNAc...) asparagine glycosylation is present at Asn-723. 8 helical membrane-spanning segments follow: residues 860–880, 979–999, 1023–1043, 1069–1089, 1105–1125, 1135–1155, 1164–1184, and 1194–1214; these read TLLS…FENI, CFPV…KPSA, TAFW…SSVT, MVDI…DYLF, IPCS…ISFI, IWSL…LLAF, IIFL…LHLF, and VIEP…FIFT. Positions 1283-1516 constitute an ABC transporter 2 domain; sequence LRKEYAGKQK…FGKDYLLEMK (234 aa). 1321-1328 provides a ligand contact to ATP; the sequence is GHNGAGKS.

This sequence belongs to the ABC transporter superfamily. ABCA family. In terms of tissue distribution, expressed in heart, brain, lung, liver and skeletal muscle. Highly expressed in the liver, and is also abundant in heart and skeletal muscle. Highly expressed in liver.

It localises to the cell membrane. The protein resides in the basolateral cell membrane. The catalysed reaction is taurocholate(in) + ATP + H2O = taurocholate(out) + ADP + phosphate + H(+). It catalyses the reaction cholesterol(in) + ATP + H2O = cholesterol(out) + ADP + phosphate + H(+). Its activity is regulated as follows. Cholesterol efflux is increased by extracellularly applied taurocholate. Its function is as follows. Mediates cholesterol and taurocholate efflux. Through the interaction with ABCA1 potentiates the cholesterol efflux to lipid-free APOA1, in turn regulates high-density lipoprotein cholesterol levels. This Mus musculus (Mouse) protein is ABC-type organic anion transporter ABCA8B.